The chain runs to 113 residues: Small ribosomal subunit protein uS15 (113 aa).

It belongs to the universal ribosomal protein uS15 family. Part of the 30S ribosomal subunit. Forms a bridge to the 50S subunit in the 70S ribosome, contacting the 23S rRNA.

One of the primary rRNA binding proteins, it binds directly to 16S rRNA where it helps nucleate assembly of the platform of the 30S subunit by binding and bridging several RNA helices of the 16S rRNA. In terms of biological role, forms an intersubunit bridge (bridge B4) with the 23S rRNA of the 50S subunit in the ribosome. The polypeptide is Small ribosomal subunit protein uS15 (Haemophilus influenzae (strain PittEE)).